A 351-amino-acid polypeptide reads, in one-letter code: Divinyl chlorophyll a/b light-harvesting protein PcbC (351 aa).

6 helical membrane passes run 27-47 (FIAA…AFTL), 64-84 (LICL…GVIT), 89-109 (CTVI…GGLL), 203-223 (VMGG…FHIA), 244-264 (VLSY…FWCA), and 306-326 (LSNV…WHAL).

This sequence belongs to the PsbB/PsbC family. IsiA/Pcb subfamily. As to quaternary structure, the antenna complex consists of divinyl chlorophylls (a and b) and divinyl chlorophyll a/b binding proteins and binds more divinyl chlorophyll b than does the antenna complex from high-light-adapted Prochlorococcus. It depends on divinyl chlorophyll a as a cofactor. Requires divinyl chlorophyll b as cofactor.

The protein localises to the cellular thylakoid membrane. In terms of biological role, the antenna complex functions as a light receptor, it captures and delivers excitation energy to photosystems II and I. The Prochlorales pcb genes are not related to higher plant LHCs. This Prochlorococcus marinus (strain SARG / CCMP1375 / SS120) protein is Divinyl chlorophyll a/b light-harvesting protein PcbC (pcbC).